The chain runs to 657 residues: MSPTPPLFSLPEARTRFTKSTREALNNKNIKPLLSTFSQVPGSENEKKCTLDQAFRGILEEEIINHSSCENVLAIISLAIGGVTEGICTASTPFVLLGDVLDCLPLDQCDTIFTFVEKNVATWKSNTFYSAGKNYLLRMCNDLLRRLSKSQNTVFCGRIQLFLARLFPLSEKSGLNLQSQFNLENVTVFNTNEQESTLGQKHTEDREEGMDVEEGEMGDEEAPTTCSIPIDYNLYRKFWSLQDYFRNPVQCYEKISWKTFLKYSEEVLAVFKSYKLDDTQASRKKMEELKTGGEHVYFAKFLTSEKLMDLQLSDSNFRRHILLQYLILFQYLKGQVKFKSSNYVLTDEQSLWIEDTTKSVYQLLSENPPDGERFSKMVEHILNTEENWNSWKNEGCPSFVKERTSDTKPTRIIRKRTAPEDFLGKGPTKKILMGNEELTRLWNLCPDNMEACKSETREHMPTLEEFFEEAIEQADPENMVENEYKAVNNSNYGWRALRLLARRSPHFFQPTNQQFKSLPEYLENMVIKLAKELPPPSEEIKTGEDEDEEDNDALLKENESPDVRRDKPVTGEQIEVFANKLGEQWKILAPYLEMKDSEIRQIECDSEDMKMRAKQLLVAWQDQEGVHATPENLINALNKSGLSDLAESLTNDNETNS.

Position 1 is an N-acetylmethionine (Met1). Residue Ser2 is modified to Phosphoserine. Thr4 carries the post-translational modification Phosphothreonine. A Glycyl lysine isopeptide (Lys-Gly) (interchain with G-Cter in SUMO2) cross-link involves residue Lys31. Residue Lys133 is modified to N6-acetyllysine. The dock domain; interaction with THOC2 stretch occupies residues 133–167 (KNYLLRMCNDLLRRLSKSQNTVFCGRIQLFLARLF). The segment at 194–222 (QESTLGQKHTEDREEGMDVEEGEMGDEEA) is disordered. A compositionally biased stretch (acidic residues) spans 206–222 (REEGMDVEEGEMGDEEA). A dock domain; interaction with THOC2 region spans residues 227–397 (SIPIDYNLYR…WNSWKNEGCP (171 aa)). Residue Lys300 is modified to N6-acetyllysine. Lys408 participates in a covalent cross-link: Glycyl lysine isopeptide (Lys-Gly) (interchain with G-Cter in SUMO2). The Nuclear localization signal signature appears at 414–430 (RKRTAPEDFLGKGPTKK). The segment at 533 to 569 (LPPPSEEIKTGEDEDEEDNDALLKENESPDVRRDKPV) is disordered. A Phosphoserine modification is found at Ser537. A Phosphothreonine modification is found at Thr542. Basic and acidic residues predominate over residues 553–569 (ALLKENESPDVRRDKPV). Ser560 carries the post-translational modification Phosphoserine. Positions 570–653 (TGEQIEVFAN…DLAESLTNDN (84 aa)) constitute a Death domain. Lys580 is covalently cross-linked (Glycyl lysine isopeptide (Lys-Gly) (interchain with G-Cter in SUMO2)). Lys595 is covalently cross-linked (Glycyl lysine isopeptide (Lys-Gly) (interchain with G-Cter in SUMO1); alternate). A Glycyl lysine isopeptide (Lys-Gly) (interchain with G-Cter in SUMO2); alternate cross-link involves residue Lys595.

It belongs to the THOC1 family. In terms of assembly, component of the THO subcomplex, which is composed of THOC1, THOC2, THOC3, THOC5, THOC6 and THOC7. The THO subcomplex interacts with DDX39B to form the THO-DDX39B complex which multimerizes into a 28-subunit tetrameric assembly. Component of the transcription/export (TREX) complex at least composed of ALYREF/THOC4, DDX39B, SARNP/CIP29, CHTOP and the THO subcomplex; in the complex interacts with THOC2, THOC5 and THOC7. TREX seems to have a dynamic structure involving ATP-dependent remodeling. Binds to the hypophosphorylated form of RB1. Interacts with RNA polymerase II. Interacts with LUZP4. In terms of processing, expression is altered specifically during apoptosis and is accompanied by the appearance of novel forms with smaller apparent molecular mass. Post-translationally, polyubiquitinated, leading to proteasomal degradation; probably involves NEDD4. Ubiquitous. Expressed in various cancer cell lines. Expressed at very low levels in normal breast epithelial cells and highly expressed in breast tumors. Expression is strongly associated with an aggressive phenotype of breast tumors and expression correlates with tumor size and the metastatic state of the tumor progression.

It is found in the nucleus speckle. Its subcellular location is the nucleus. It localises to the nucleoplasm. The protein localises to the nucleus matrix. The protein resides in the cytoplasm. Component of the THO subcomplex of the TREX complex which is thought to couple mRNA transcription, processing and nuclear export, and which specifically associates with spliced mRNA and not with unspliced pre-mRNA. Required for efficient export of polyadenylated RNA. The THOC1-THOC2-THOC3 core complex alone is sufficient to bind export factor NXF1-NXT1 and promote ATPase activity of DDX39B/UAP56. TREX is recruited to spliced mRNAs by a transcription-independent mechanism, binds to mRNA upstream of the exon-junction complex (EJC) and is recruited in a splicing- and cap-dependent manner to a region near the 5' end of the mRNA where it functions in mRNA export to the cytoplasm via the TAP/NXF1 pathway. Regulates transcriptional elongation of a subset of genes. Involved in genome stability by preventing co-transcriptional R-loop formation. May play a role in hair cell formation, hence may be involved in hearing. Its function is as follows. Participates in an apoptotic pathway which is characterized by activation of caspase-6, increases in the expression of BAK1 and BCL2L1 and activation of NF-kappa-B. This pathway does not require p53/TP53, nor does the presence of p53/TP53 affect the efficiency of cell killing. Activates a G2/M cell cycle checkpoint prior to the onset of apoptosis. Apoptosis is inhibited by association with RB1. In terms of biological role, (Microbial infection) The TREX complex is essential for the export of Kaposi's sarcoma-associated herpesvirus (KSHV) intronless mRNAs and infectious virus production. The sequence is that of THO complex subunit 1 (THOC1) from Homo sapiens (Human).